We begin with the raw amino-acid sequence, 93 residues long: Alpha-defensin 23 (93 aa).

The signal sequence occupies residues 1–19 (MKTLVLLSALILLAFQVQA). A propeptide spanning residues 20-58 (DPIQNTDEETKTEEQPGKEDQAVSVSFGDPEGSSLQEES) is cleaved from the precursor. The segment at 24–54 (NTDEETKTEEQPGKEDQAVSVSFGDPEGSSL) is disordered. Positions 27–40 (EETKTEEQPGKEDQ) are enriched in basic and acidic residues. 3 disulfides stabilise this stretch: cysteine 64/cysteine 92, cysteine 66/cysteine 81, and cysteine 71/cysteine 91.

It belongs to the alpha-defensin family.

It localises to the secreted. Its function is as follows. May have microbicidal activities. The sequence is that of Alpha-defensin 23 (Defa23) from Mus musculus (Mouse).